A 256-amino-acid polypeptide reads, in one-letter code: Probable ABC transporter ATP-binding protein spyM18_0273 (256 aa).

Residues 4–246 (LEINNLHVSI…EKEGYAGIAQ (243 aa)) form the ABC transporter domain. ATP is bound at residue 36-43 (GPNGTGKS).

The protein belongs to the ABC transporter superfamily. Ycf16 family.

It localises to the cell membrane. The chain is Probable ABC transporter ATP-binding protein spyM18_0273 from Streptococcus pyogenes serotype M18 (strain MGAS8232).